A 503-amino-acid chain; its full sequence is Zinc finger and BTB domain-containing protein 37 (503 aa).

The BTB domain maps to 32–96 (CDIVVNVQGQ…CYTGRICLQL (65 aa)). Disordered stretches follow at residues 140-206 (QTRT…SDVE) and 280-344 (GHGS…QVEE). The segment covering 144–154 (KHQERPPESHR) has biased composition (basic and acidic residues). The span at 155 to 167 (VTPNLNRSLSPRH) shows a compositional bias: polar residues. A compositionally biased stretch (basic and acidic residues) spans 319-336 (TERHRARSESPGRMDEPK). C2H2-type zinc fingers lie at residues 373-395 (LTCIYCAKSFNQKGSLDRHMRLH), 401-423 (FVCRMCGKKYTRKDQLEYHIRKH), and 429-452 (FHCHVCGKSFPFQAILNQHFRKNH). Positions 457–503 (PLEGPHSISPETTVTSRGQAEEESPSQEETVAPGEAVQGSVSTTGPD) are disordered. Over residues 465–474 (SPETTVTSRG) the composition is skewed to polar residues.

It localises to the nucleus. Its function is as follows. May be involved in transcriptional regulation. The protein is Zinc finger and BTB domain-containing protein 37 (ZBTB37) of Homo sapiens (Human).